A 530-amino-acid polypeptide reads, in one-letter code: Tegument protein UL21 homolog (530 aa).

Belongs to the alphaherpesvirinae UL21 protein family. Interacts (via C-terminus) with UL16.

The protein resides in the virion tegument. The protein localises to the host cytoplasm. It is found in the host nucleus. Its function is as follows. May participate in DNA packaging/capsid maturation events. Promotes efficient incorporation of tegument proteins UL46, UL49, and US3 homologs into virions. May also play a role in capsid transport to the trans-Golgi network (TGN). In Equus caballus (Horse), this protein is Tegument protein UL21 homolog.